A 184-amino-acid chain; its full sequence is Adenine phosphoribosyltransferase 2 (184 aa).

It belongs to the purine/pyrimidine phosphoribosyltransferase family. As to quaternary structure, homodimer.

The protein localises to the cytoplasm. The enzyme catalyses AMP + diphosphate = 5-phospho-alpha-D-ribose 1-diphosphate + adenine. Its pathway is purine metabolism; AMP biosynthesis via salvage pathway; AMP from adenine: step 1/1. In terms of biological role, catalyzes a salvage reaction resulting in the formation of AMP, that is energically less costly than de novo synthesis. This Rhizobium etli (strain ATCC 51251 / DSM 11541 / JCM 21823 / NBRC 15573 / CFN 42) protein is Adenine phosphoribosyltransferase 2.